The sequence spans 276 residues: MHPAAEHSPLGKSSEYISTYTPSLLFPIPRAAKWAELGLSAETLPYKGVDFWNCFELSWLLPSGKPVVAIGEFSIPADSPNIIESKSFKLYLNSLNQTAFADTASLEATLRTDLSAAAGKPVTVRIRTLAESEAEGVMALPGVCIDDLDISVSNYEHPRPELLRCDDARVVEESVHSHLLKSNCPVTSQPDWGSVVVEYRGHALDHASLLEYIVSFRQHSDFHEQCVERIFLDLQRLLKPEKLTVYARYVRRGGLDINPYRSTEDVAFQNVRLARQ.

Residue 83 to 85 (IES) participates in substrate binding. NADPH is bound at residue 85-86 (SK). Cys184 (thioimide intermediate) is an active-site residue. Asp191 serves as the catalytic Proton donor. Position 223–224 (223–224 (HE)) interacts with substrate. Position 252 to 253 (252 to 253 (RG)) interacts with NADPH.

This sequence belongs to the GTP cyclohydrolase I family. QueF type 2 subfamily. Homodimer.

It localises to the cytoplasm. The enzyme catalyses 7-aminomethyl-7-carbaguanine + 2 NADP(+) = 7-cyano-7-deazaguanine + 2 NADPH + 3 H(+). It functions in the pathway tRNA modification; tRNA-queuosine biosynthesis. Catalyzes the NADPH-dependent reduction of 7-cyano-7-deazaguanine (preQ0) to 7-aminomethyl-7-deazaguanine (preQ1). The chain is NADPH-dependent 7-cyano-7-deazaguanine reductase from Pseudomonas fluorescens (strain SBW25).